A 322-amino-acid chain; its full sequence is 4-hydroxy-3-methylbut-2-enyl diphosphate reductase (322 aa).

Cysteine 12 is a binding site for [4Fe-4S] cluster. Residues histidine 43 and histidine 81 each coordinate (2E)-4-hydroxy-3-methylbut-2-enyl diphosphate. Residues histidine 43 and histidine 81 each contribute to the dimethylallyl diphosphate site. Histidine 43 and histidine 81 together coordinate isopentenyl diphosphate. Cysteine 103 is a [4Fe-4S] cluster binding site. Histidine 131 provides a ligand contact to (2E)-4-hydroxy-3-methylbut-2-enyl diphosphate. Histidine 131 is a binding site for dimethylallyl diphosphate. Position 131 (histidine 131) interacts with isopentenyl diphosphate. The active-site Proton donor is the glutamate 133. Residue threonine 172 coordinates (2E)-4-hydroxy-3-methylbut-2-enyl diphosphate. Cysteine 200 serves as a coordination point for [4Fe-4S] cluster. Positions 228, 230, and 273 each coordinate (2E)-4-hydroxy-3-methylbut-2-enyl diphosphate. Positions 228, 230, and 273 each coordinate dimethylallyl diphosphate. Serine 228, asparagine 230, and serine 273 together coordinate isopentenyl diphosphate.

This sequence belongs to the IspH family. It depends on [4Fe-4S] cluster as a cofactor.

The catalysed reaction is isopentenyl diphosphate + 2 oxidized [2Fe-2S]-[ferredoxin] + H2O = (2E)-4-hydroxy-3-methylbut-2-enyl diphosphate + 2 reduced [2Fe-2S]-[ferredoxin] + 2 H(+). It catalyses the reaction dimethylallyl diphosphate + 2 oxidized [2Fe-2S]-[ferredoxin] + H2O = (2E)-4-hydroxy-3-methylbut-2-enyl diphosphate + 2 reduced [2Fe-2S]-[ferredoxin] + 2 H(+). The protein operates within isoprenoid biosynthesis; dimethylallyl diphosphate biosynthesis; dimethylallyl diphosphate from (2E)-4-hydroxy-3-methylbutenyl diphosphate: step 1/1. Its pathway is isoprenoid biosynthesis; isopentenyl diphosphate biosynthesis via DXP pathway; isopentenyl diphosphate from 1-deoxy-D-xylulose 5-phosphate: step 6/6. In terms of biological role, catalyzes the conversion of 1-hydroxy-2-methyl-2-(E)-butenyl 4-diphosphate (HMBPP) into a mixture of isopentenyl diphosphate (IPP) and dimethylallyl diphosphate (DMAPP). Acts in the terminal step of the DOXP/MEP pathway for isoprenoid precursor biosynthesis. The polypeptide is 4-hydroxy-3-methylbut-2-enyl diphosphate reductase (Macrococcus caseolyticus (strain JCSC5402) (Macrococcoides caseolyticum)).